We begin with the raw amino-acid sequence, 360 residues long: Arginase, non-hepatic 1 (360 aa).

Positions 122, 145, 147, and 149 each coordinate Mn(2+). Substrate is bound by residues 147–151, 158–160, and Asp-204; these read HADIN and SGN. Positions 253 and 255 each coordinate Mn(2+). Substrate contacts are provided by Thr-267 and Glu-298.

It belongs to the arginase family. As to quaternary structure, homotrimer. Mn(2+) serves as cofactor. Expressed at differing tadpole stages in tail, intestine, hindlimb and trunk region. Most abundant in tadpole tail.

It carries out the reaction L-arginine + H2O = urea + L-ornithine. It participates in nitrogen metabolism; urea cycle; L-ornithine and urea from L-arginine: step 1/1. Its function is as follows. As well as its role in the urea cycle, may be involved in tissue remodeling. The sequence is that of Arginase, non-hepatic 1 (arg2-a) from Xenopus laevis (African clawed frog).